Consider the following 620-residue polypeptide: 1-deoxy-D-xylulose-5-phosphate synthase (620 aa).

Thiamine diphosphate contacts are provided by residues histidine 80 and 121–123 (GHS). Aspartate 152 contributes to the Mg(2+) binding site. Thiamine diphosphate contacts are provided by residues 153 to 154 (GA), asparagine 181, tyrosine 288, and glutamate 370. Asparagine 181 lines the Mg(2+) pocket.

This sequence belongs to the transketolase family. DXPS subfamily. In terms of assembly, homodimer. Mg(2+) is required as a cofactor. It depends on thiamine diphosphate as a cofactor.

The catalysed reaction is D-glyceraldehyde 3-phosphate + pyruvate + H(+) = 1-deoxy-D-xylulose 5-phosphate + CO2. Its pathway is metabolic intermediate biosynthesis; 1-deoxy-D-xylulose 5-phosphate biosynthesis; 1-deoxy-D-xylulose 5-phosphate from D-glyceraldehyde 3-phosphate and pyruvate: step 1/1. Functionally, catalyzes the acyloin condensation reaction between C atoms 2 and 3 of pyruvate and glyceraldehyde 3-phosphate to yield 1-deoxy-D-xylulose-5-phosphate (DXP). The protein is 1-deoxy-D-xylulose-5-phosphate synthase of Salmonella heidelberg (strain SL476).